The following is a 123-amino-acid chain: Secreted RxLR effector protein RXLR-C21 (123 aa).

A signal peptide spans 1–23 (MRLHLLVLSVIVVSLLVSDNAHA). The RxLR-dEER signature appears at 32–65 (RALRETPINGLVTNQLAVSRNLTPAKFITNSEER). The chain crosses the membrane as a helical span at residues 101 to 121 (VTTICSIVLFVMVFGCLYKIF).

This sequence belongs to the RxLR effector family.

The protein resides in the secreted. Its subcellular location is the host endoplasmic reticulum membrane. Secreted effector that does not suppress pattern-triggered immunity (PTI) in plant host. In Plasmopara halstedii (Downy mildew of sunflower), this protein is Secreted RxLR effector protein RXLR-C21.